The following is a 245-amino-acid chain: Orotidine 5'-phosphate decarboxylase (245 aa).

Substrate-binding positions include aspartate 22, lysine 44, 71-80, threonine 131, arginine 192, glutamine 201, glycine 221, and arginine 222; that span reads DLKFHDIPNT. Lysine 73 serves as the catalytic Proton donor.

It belongs to the OMP decarboxylase family. Type 1 subfamily. Homodimer.

The enzyme catalyses orotidine 5'-phosphate + H(+) = UMP + CO2. The protein operates within pyrimidine metabolism; UMP biosynthesis via de novo pathway; UMP from orotate: step 2/2. In terms of biological role, catalyzes the decarboxylation of orotidine 5'-monophosphate (OMP) to uridine 5'-monophosphate (UMP). The polypeptide is Orotidine 5'-phosphate decarboxylase (Escherichia coli O139:H28 (strain E24377A / ETEC)).